Reading from the N-terminus, the 94-residue chain is MNHYVYILECKDGSWYTGYTTDVDRRIKKHASGKGAKYTRGRGPFRLVATWAFPSKEEAMRWEYEVKHLSRRKKEQLVSLKGGPYENTTKLSTT.

Residues 1–76 (MNHYVYILEC…KHLSRRKKEQ (76 aa)) enclose the GIY-YIG domain.

Belongs to the UPF0213 family.

This is UPF0213 protein BH0048 from Halalkalibacterium halodurans (strain ATCC BAA-125 / DSM 18197 / FERM 7344 / JCM 9153 / C-125) (Bacillus halodurans).